The sequence spans 402 residues: Speedy protein E6 (402 aa).

The tract at residues 1-89 (MDRTETRFRK…EEPEKELAPE (89 aa)) is disordered. The segment covering 16-39 (GKITTSRQPHPQNEQSPQRSTSGY) has biased composition (polar residues). A compositionally biased stretch (acidic residues) spans 76–89 (DESEEEPEKELAPE).

It belongs to the Speedy/Ringo family.

The protein is Speedy protein E6 (SPDYE6) of Homo sapiens (Human).